The following is a 97-amino-acid chain: Small ribosomal subunit protein bS6 (97 aa).

This sequence belongs to the bacterial ribosomal protein bS6 family.

Its function is as follows. Binds together with bS18 to 16S ribosomal RNA. The polypeptide is Small ribosomal subunit protein bS6 (Dictyoglomus turgidum (strain DSM 6724 / Z-1310)).